The chain runs to 250 residues: 23S rRNA (guanosine-2'-O-)-methyltransferase RlmB (250 aa).

S-adenosyl-L-methionine contacts are provided by G197, I217, and M226.

It belongs to the class IV-like SAM-binding methyltransferase superfamily. RNA methyltransferase TrmH family. RlmB subfamily.

Its subcellular location is the cytoplasm. It carries out the reaction guanosine(2251) in 23S rRNA + S-adenosyl-L-methionine = 2'-O-methylguanosine(2251) in 23S rRNA + S-adenosyl-L-homocysteine + H(+). Functionally, specifically methylates the ribose of guanosine 2251 in 23S rRNA. The sequence is that of 23S rRNA (guanosine-2'-O-)-methyltransferase RlmB from Neisseria meningitidis serogroup B (strain ATCC BAA-335 / MC58).